A 106-amino-acid polypeptide reads, in one-letter code: MIAKVFKSITPESYILLVNAGLISAYGVRIIFQSVKNDEGKVDEKAHIGIGHFFKKRGAQLVDGKNLTDILKEKKKKKKKKKKINISNKLIIFKISRQLYSKLKLK.

Residues 15–32 form a helical membrane-spanning segment; sequence ILLVNAGLISAYGVRIIF.

Its subcellular location is the cell membrane. Functionally, involved in starvation response and aggregation stage of the life cycle. May be involved in fruiting body morphogenesis and spore formation. The polypeptide is Starvation responsive small protein A (Dictyostelium discoideum (Social amoeba)).